The following is a 437-amino-acid chain: tRNA wybutosine-synthesizing protein 2 homolog (437 aa).

S-adenosyl-L-methionine-binding positions include serine 208, lysine 215, glutamate 255, and 283–284 (DN). Polar residues predominate over residues 331–344 (SFSGKNPQPPGSSN). Positions 331–374 (SFSGKNPQPPGSSNMEKKHWPHPQKITTDKQGNRTTGSCMGEMS) are disordered.

It belongs to the class I-like SAM-binding methyltransferase superfamily. TRM5/TYW2 family.

The enzyme catalyses 4-demethylwyosine(37) in tRNA(Phe) + S-adenosyl-L-methionine = 4-demethyl-7-[(3S)-3-amino-3-carboxypropyl]wyosine(37) in tRNA(Phe) + S-methyl-5'-thioadenosine + H(+). It functions in the pathway tRNA modification; wybutosine-tRNA(Phe) biosynthesis. In terms of biological role, S-adenosyl-L-methionine-dependent transferase that acts as a component of the wybutosine biosynthesis pathway. Wybutosine is a hyper modified guanosine with a tricyclic base found at the 3'-position adjacent to the anticodon of eukaryotic phenylalanine tRNA. Catalyzes the transfer of the alpha-amino-alpha-carboxypropyl (acp) group from S-adenosyl-L-methionine to the C-7 position of 4-demethylwyosine (imG-14) to produce wybutosine-86. The protein is tRNA wybutosine-synthesizing protein 2 homolog (Trmt12) of Rattus norvegicus (Rat).